Reading from the N-terminus, the 437-residue chain is Aspartate--tRNA(Asp/Asn) ligase (437 aa).

L-aspartate is bound at residue Glu175. The aspartate stretch occupies residues 197-200; the sequence is QLYK. An L-aspartate-binding site is contributed by Arg219. Residues 219-221, 227-229, and Glu360 each bind ATP; these read RAE and RHL. Mg(2+) is bound by residues Glu360 and Ser363. L-aspartate-binding residues include Ser363 and Arg367. ATP is bound at residue 408–411; it reads GAER.

This sequence belongs to the class-II aminoacyl-tRNA synthetase family. Type 2 subfamily. Homodimer. Mg(2+) is required as a cofactor.

It is found in the cytoplasm. It catalyses the reaction tRNA(Asx) + L-aspartate + ATP = L-aspartyl-tRNA(Asx) + AMP + diphosphate. Its function is as follows. Aspartyl-tRNA synthetase with relaxed tRNA specificity since it is able to aspartylate not only its cognate tRNA(Asp) but also tRNA(Asn). Reaction proceeds in two steps: L-aspartate is first activated by ATP to form Asp-AMP and then transferred to the acceptor end of tRNA(Asp/Asn). In Methanothermobacter thermautotrophicus (strain ATCC 29096 / DSM 1053 / JCM 10044 / NBRC 100330 / Delta H) (Methanobacterium thermoautotrophicum), this protein is Aspartate--tRNA(Asp/Asn) ligase.